Reading from the N-terminus, the 381-residue chain is ADP,ATP carrier protein 1, mitochondrial (381 aa).

The transit peptide at 1 to 70 (MVDQVQHPTI…ATTASPVFVQ (70 aa)) directs the protein to the mitochondrion. Solcar repeat units lie at residues 78-171 (TNFA…FKRL), 183-276 (KWFA…VKPV), and 284-370 (DSFF…LQLI). The next 5 membrane-spanning stretches (helical) occupy residues 80–107 (FALD…VKLL), 148–172 (TANV…KRLF), 181–201 (YWKW…SSLL), 252–273 (FNIS…YDSV), and 287–307 (FASF…SYPI). Positions 153 and 165 each coordinate ADP. Position 311 (Arg311) interacts with ADP. The interval 311 to 316 (RRRMMM) is important for transport activity. The short motif at 311-316 (RRRMMM) is the Nucleotide carrier signature motif element. The chain crosses the membrane as a helical span at residues 347-367 (AGANILRAVAGAGVLSGYDKL).

It belongs to the mitochondrial carrier (TC 2.A.29) family. In terms of assembly, monomer.

It localises to the mitochondrion inner membrane. It catalyses the reaction ADP(in) + ATP(out) = ADP(out) + ATP(in). Its activity is regulated as follows. The matrix-open state (m-state) is inhibited by the membrane-permeable bongkrekic acid (BKA). The cytoplasmic-open state (c-state) is inhibited by the membrane-impermeable toxic inhibitor carboxyatractyloside (CATR). In terms of biological role, ADP:ATP antiporter that mediates import of ADP into the mitochondrial matrix for ATP synthesis, and export of ATP out to fuel the cell. Cycles between the cytoplasmic-open state (c-state) and the matrix-open state (m-state): operates by the alternating access mechanism with a single substrate-binding site intermittently exposed to either the cytosolic (c-state) or matrix (m-state) side of the inner mitochondrial membrane. The polypeptide is ADP,ATP carrier protein 1, mitochondrial (AAC1) (Arabidopsis thaliana (Mouse-ear cress)).